We begin with the raw amino-acid sequence, 327 residues long: MKELIKEHQKDINPALQLHDWVEYYRPFAANGQSANYIPALGKVNDSQLGICVLEPDGTMIHAGDWNVSFTMQSISKVISFIAACMSRGIPYVLDRVDVEPTGDAFNSIIRLEINKPGKPFNPMINAGALTIASILPGESAYEKLEFLYSVMETLIGKRPRIHEEVFRSEWETAHRNRALAYYLKETNFLEAEVEETLEVYLKQCAMESTTEDIALIGLILAHDGYHPIRHEQVIPKDVAKLAKALMLTCGMYNASGKYAAFVGVPAKSGVSGGIMALVPPSARREQPFQSGCGIGIYGPAIDEYGNSLTGGMLLKHMAQEWELSIF.

Substrate-binding residues include Ser74, Asn126, Glu170, Asn177, Tyr201, Tyr253, and Val271.

It belongs to the glutaminase family. Homotetramer.

It catalyses the reaction L-glutamine + H2O = L-glutamate + NH4(+). This is Glutaminase 1 (glsA1) from Bacillus subtilis (strain 168).